We begin with the raw amino-acid sequence, 173 residues long: Xanthine-guanine phosphoribosyltransferase (173 aa).

5-phospho-alpha-D-ribose 1-diphosphate contacts are provided by residues 48–49 (RG) and 107–115 (DDLVDTGKT). Position 108 (Asp108) interacts with Mg(2+). Residues Asp111 and Ile154 each coordinate guanine. 2 residues coordinate xanthine: Asp111 and Ile154. GMP contacts are provided by residues 111-115 (DTGKT) and 153-154 (WI).

It belongs to the purine/pyrimidine phosphoribosyltransferase family. XGPT subfamily. In terms of assembly, homotetramer. Requires Mg(2+) as cofactor.

Its subcellular location is the cell inner membrane. The catalysed reaction is GMP + diphosphate = guanine + 5-phospho-alpha-D-ribose 1-diphosphate. The enzyme catalyses XMP + diphosphate = xanthine + 5-phospho-alpha-D-ribose 1-diphosphate. It carries out the reaction IMP + diphosphate = hypoxanthine + 5-phospho-alpha-D-ribose 1-diphosphate. It functions in the pathway purine metabolism; GMP biosynthesis via salvage pathway; GMP from guanine: step 1/1. The protein operates within purine metabolism; XMP biosynthesis via salvage pathway; XMP from xanthine: step 1/1. In terms of biological role, purine salvage pathway enzyme that catalyzes the transfer of the ribosyl-5-phosphate group from 5-phospho-alpha-D-ribose 1-diphosphate (PRPP) to the N9 position of the 6-oxopurines guanine and xanthine to form the corresponding ribonucleotides GMP (guanosine 5'-monophosphate) and XMP (xanthosine 5'-monophosphate), with the release of PPi. To a lesser extent, also acts on hypoxanthine. This chain is Xanthine-guanine phosphoribosyltransferase, found in Rhodopseudomonas palustris (strain ATCC BAA-98 / CGA009).